The sequence spans 208 residues: Vacuolar ATPase assembly protein VMA12 (208 aa).

At Ala2 the chain carries N-acetylalanine. The next 2 helical transmembrane spans lie at 146-166 and 179-199; these read LVIT…CTYL and VLAA…VMVR.

In terms of assembly, accessory component of the multisubunit proton-transporting vacuolar (V)-ATPase protein pump.

It localises to the cytoplasmic vesicle. Its subcellular location is the COPI-coated vesicle membrane. It is found in the endoplasmic reticulum-Golgi intermediate compartment membrane. The protein resides in the endoplasmic reticulum membrane. Its function is as follows. Accessory component of the proton-transporting vacuolar (V)-ATPase protein pump involved in intracellular iron homeostasis. In aerobic conditions, required for intracellular iron homeostasis, thus triggering the activity of Fe(2+) prolyl hydroxylase (PHD) enzymes, and leading to HIF1A hydroxylation and subsequent proteasomal degradation. Necessary for endolysosomal acidification and lysosomal degradation. May be involved in Golgi homeostasis. Binds 20(S)-hydroxycholesterol (20(S)-OHC). The chain is Vacuolar ATPase assembly protein VMA12 from Homo sapiens (Human).